The following is a 98-amino-acid chain: NADH-ubiquinone oxidoreductase chain 4L (98 aa).

Transmembrane regions (helical) follow at residues 1–21 (MPST…GLLL), 29–49 (SLLC…LMAL), and 61–81 (IVLM…LVMV).

The protein belongs to the complex I subunit 4L family. As to quaternary structure, core subunit of respiratory chain NADH dehydrogenase (Complex I) which is composed of 45 different subunits.

The protein localises to the mitochondrion inner membrane. The enzyme catalyses a ubiquinone + NADH + 5 H(+)(in) = a ubiquinol + NAD(+) + 4 H(+)(out). Functionally, core subunit of the mitochondrial membrane respiratory chain NADH dehydrogenase (Complex I) which catalyzes electron transfer from NADH through the respiratory chain, using ubiquinone as an electron acceptor. Part of the enzyme membrane arm which is embedded in the lipid bilayer and involved in proton translocation. This is NADH-ubiquinone oxidoreductase chain 4L (MT-ND4L) from Choloepus didactylus (Southern two-toed sloth).